The sequence spans 791 residues: GDH/6PGL endoplasmic bifunctional protein (791 aa).

A signal peptide spans Met1–Ala19. Pyrrolidone carboxylic acid is present on Gln20. Residues Gln20–Gln526 are hexose-6-phosphate dehydrogenase. Residues Gly32–Lys39 and Tyr149 contribute to the NADP(+) site. N-linked (GlcNAc...) asparagine glycosylation is present at Asn157. Lys174 contacts NADP(+). D-glucose 6-phosphate is bound by residues Lys174, His204–Lys208, Glu243, and Asp262. Lys208 carries the post-translational modification N6-succinyllysine. His267 serves as the catalytic Proton acceptor. Asn282 is a glycosylation site (N-linked (GlcNAc...) asparagine). The D-glucose 6-phosphate site is built by Lys360 and Arg365. An NADP(+)-binding site is contributed by Arg370. The linker stretch occupies residues Pro527–Pro540. Positions Ser541–Gly791 are 6-phosphogluconolactonase. An NADP(+)-binding site is contributed by Trp617. Residue Asn683 is glycosylated (N-linked (GlcNAc...) asparagine).

The protein in the N-terminal section; belongs to the glucose-6-phosphate dehydrogenase family. It in the C-terminal section; belongs to the glucosamine/galactosamine-6-phosphate isomerase family. 6-phosphogluconolactonase subfamily. In terms of assembly, homodimer. Present in most tissues examined, strongest in liver.

Its subcellular location is the endoplasmic reticulum lumen. It catalyses the reaction D-glucose 6-phosphate + NADP(+) = 6-phospho-D-glucono-1,5-lactone + NADPH + H(+). The enzyme catalyses D-glucose 6-phosphate + NAD(+) = 6-phospho-D-glucono-1,5-lactone + NADH + H(+). The catalysed reaction is 6-phospho-D-glucono-1,5-lactone + H2O = 6-phospho-D-gluconate + H(+). It carries out the reaction 2-deoxy-D-glucose 6-phosphate + NAD(+) = 2-deoxy-6-phospho-D-glucono-1,5-lactone + NADH + H(+). It catalyses the reaction 2-deoxy-D-glucose 6-phosphate + NADP(+) = 2-deoxy-6-phospho-D-glucono-1,5-lactone + NADPH + H(+). The enzyme catalyses D-galactose 6-phosphate + NADP(+) = 6-phospho-D-galactono-1,5-lactone + NADPH + H(+). The catalysed reaction is D-galactose 6-phosphate + NAD(+) = 6-phospho-D-galactono-1,5-lactone + NADH + H(+). It carries out the reaction D-glucosamine 6-phosphate + NADP(+) = 2-amino-2-deoxy-6-phospho-D-glucono-1,5-lactone + NADPH + 2 H(+). It catalyses the reaction D-glucose + NAD(+) = D-glucono-1,5-lactone + NADH + H(+). The enzyme catalyses D-glucose + NADP(+) = D-glucono-1,5-lactone + NADPH + H(+). The catalysed reaction is D-glucose 6-sulfate + NADP(+) = 6-sulfo-D-glucono-1,5-lactone + NADPH + H(+). Its pathway is carbohydrate degradation; pentose phosphate pathway; D-ribulose 5-phosphate from D-glucose 6-phosphate (oxidative stage): step 1/3. It participates in carbohydrate degradation; pentose phosphate pathway; D-ribulose 5-phosphate from D-glucose 6-phosphate (oxidative stage): step 2/3. The protein operates within carbohydrate degradation; pentose phosphate pathway; D-ribulose 5-phosphate from D-glucose 6-phosphate (oxidative stage). Bifunctional enzyme localized in the lumen of the endoplasmic reticulum that catalyzes the first two steps of the oxidative branch of the pentose phosphate pathway/shunt, an alternative to glycolysis and a major source of reducing power and metabolic intermediates for biosynthetic processes. Has a hexose-6-phosphate dehydrogenase activity, with broad substrate specificity compared to glucose-6-phosphate 1-dehydrogenase/G6PD, and catalyzes the first step of the pentose phosphate pathway. In addition, acts as a 6-phosphogluconolactonase and catalyzes the second step of the pentose phosphate pathway. May have a dehydrogenase activity for alternative substrates including glucosamine 6-phosphate and glucose 6-sulfate. The main function of this enzyme is to provide reducing equivalents such as NADPH to maintain the adequate levels of reductive cofactors in the oxidizing environment of the endoplasmic reticulum. By producing NADPH that is needed by reductases of the lumen of the endoplasmic reticulum like corticosteroid 11-beta-dehydrogenase isozyme 1/HSD11B1, indirectly regulates their activity. The sequence is that of GDH/6PGL endoplasmic bifunctional protein from Homo sapiens (Human).